The primary structure comprises 390 residues: MRSISVLGATGSVGESAFDLLMGAGGPERFRTVALTGGANVARLAQMARALRAELAVTAWPERLADLRAALAGSGIEAAAGPQAVAEAAARPADWTLSAIVGAAGLPPGLEVLNRGGTLALANKETLVAAGPLVMARARETGARILPVDSEHSAIFQALHGENLDSVEHVTITASGGAFRDWPLERLARATVAEASRHPNWDMGQRITIDSASMFNKALEVIEAHEFFGLGVDRLRVLVHPQSIIHAMVTHRDGGSIAHLGAPDMRHAIGYALNWPARAALPVPALDLAALGSLTFAQPDEVRWPALRLAREAIGAGGAAGAVLNAAKEQALDDFIAGRIRFTDMAPAVEHALALAAREAGFAQSPRDLGEVLHWDDFARRAAAQWQGAA.

NADPH is bound by residues T10, G11, S12, V13, G38, N40, and N123. A 1-deoxy-D-xylulose 5-phosphate-binding site is contributed by K124. An NADPH-binding site is contributed by E125. Residue D149 coordinates Mn(2+). 1-deoxy-D-xylulose 5-phosphate contacts are provided by S150, E151, S175, and H198. A Mn(2+)-binding site is contributed by E151. G204 contributes to the NADPH binding site. 1-deoxy-D-xylulose 5-phosphate is bound by residues S211, N216, K217, and E220. E220 contacts Mn(2+).

It belongs to the DXR family. It depends on Mg(2+) as a cofactor. Requires Mn(2+) as cofactor.

The catalysed reaction is 2-C-methyl-D-erythritol 4-phosphate + NADP(+) = 1-deoxy-D-xylulose 5-phosphate + NADPH + H(+). Its pathway is isoprenoid biosynthesis; isopentenyl diphosphate biosynthesis via DXP pathway; isopentenyl diphosphate from 1-deoxy-D-xylulose 5-phosphate: step 1/6. In terms of biological role, catalyzes the NADPH-dependent rearrangement and reduction of 1-deoxy-D-xylulose-5-phosphate (DXP) to 2-C-methyl-D-erythritol 4-phosphate (MEP). The protein is 1-deoxy-D-xylulose 5-phosphate reductoisomerase of Paracoccus denitrificans (strain Pd 1222).